The following is a 449-amino-acid chain: Phosphomethylpyrimidine synthase (449 aa).

Substrate is bound by residues asparagine 80, methionine 109, tyrosine 138, histidine 173, 193 to 195 (SRG), 234 to 237 (DSLR), and glutamate 273. Histidine 277 lines the Zn(2+) pocket. A substrate-binding site is contributed by tyrosine 300. Histidine 341 is a binding site for Zn(2+). Positions 421, 424, and 429 each coordinate [4Fe-4S] cluster.

The protein belongs to the ThiC family. In terms of assembly, homodimer. [4Fe-4S] cluster is required as a cofactor.

The catalysed reaction is 5-amino-1-(5-phospho-beta-D-ribosyl)imidazole + S-adenosyl-L-methionine = 4-amino-2-methyl-5-(phosphooxymethyl)pyrimidine + CO + 5'-deoxyadenosine + formate + L-methionine + 3 H(+). It functions in the pathway cofactor biosynthesis; thiamine diphosphate biosynthesis. In terms of biological role, catalyzes the synthesis of the hydroxymethylpyrimidine phosphate (HMP-P) moiety of thiamine from aminoimidazole ribotide (AIR) in a radical S-adenosyl-L-methionine (SAM)-dependent reaction. The protein is Phosphomethylpyrimidine synthase of Campylobacter hominis (strain ATCC BAA-381 / DSM 21671 / CCUG 45161 / LMG 19568 / NCTC 13146 / CH001A).